The primary structure comprises 828 residues: Outer membrane usher protein PmfC (828 aa).

A signal peptide spans 1-28 (MLIPYSPHTIWKTICATLLLSLAFFSQA).

Belongs to the fimbrial export usher family.

Its subcellular location is the cell outer membrane. In terms of biological role, involved in the export and assembly of PMF fimbrial subunits across the outer membrane. This is Outer membrane usher protein PmfC (pmfC) from Proteus mirabilis (strain HI4320).